We begin with the raw amino-acid sequence, 469 residues long: tRNA-2-methylthio-N(6)-dimethylallyladenosine synthase (469 aa).

The MTTase N-terminal domain occupies 22 to 142; sequence RKVFIKTYGC…LPEALRRAQQ (121 aa). Residues Cys31, Cys67, Cys105, Cys183, Cys187, and Cys190 each coordinate [4Fe-4S] cluster. Residues 169 to 401 form the Radical SAM core domain; that stretch reads RARGVTAFLT…QALLLKQQQE (233 aa). One can recognise a TRAM domain in the interval 404 to 466; that stretch reads ESCIGKEIDL…TNSLFAERAE (63 aa).

Belongs to the methylthiotransferase family. MiaB subfamily. Monomer. [4Fe-4S] cluster is required as a cofactor.

Its subcellular location is the cytoplasm. It catalyses the reaction N(6)-dimethylallyladenosine(37) in tRNA + (sulfur carrier)-SH + AH2 + 2 S-adenosyl-L-methionine = 2-methylsulfanyl-N(6)-dimethylallyladenosine(37) in tRNA + (sulfur carrier)-H + 5'-deoxyadenosine + L-methionine + A + S-adenosyl-L-homocysteine + 2 H(+). Functionally, catalyzes the methylthiolation of N6-(dimethylallyl)adenosine (i(6)A), leading to the formation of 2-methylthio-N6-(dimethylallyl)adenosine (ms(2)i(6)A) at position 37 in tRNAs that read codons beginning with uridine. The protein is tRNA-2-methylthio-N(6)-dimethylallyladenosine synthase of Rhizobium etli (strain CIAT 652).